A 910-amino-acid chain; its full sequence is UPF0182 protein Acid_6445 (910 aa).

The next 7 membrane-spanning stretches (helical) occupy residues 17-37 (ITLLAILLFLLFGLRSFAGYA), 56-76 (LYYGIAPVAVATLVAFLALWI), 101-121 (LALLFLAWFIAAGAIDTWTVV), 157-177 (LLRSYVLAVIIFCVLLYWIAA), 210-229 (FLRGAAVIGLIALAVRFYLG), 252-272 (IGLPLQWLVIFACLAAAAFVA), and 276-296 (WFLAALMALALVVDFAAPRIV).

This sequence belongs to the UPF0182 family.

The protein localises to the cell membrane. The sequence is that of UPF0182 protein Acid_6445 from Solibacter usitatus (strain Ellin6076).